The primary structure comprises 255 residues: Electron transfer flavoprotein beta subunit lysine methyltransferase (255 aa).

Residues 1 to 32 constitute a mitochondrion transit peptide; it reads MAFSLCWKAPRSPWSFLQAVNNGSPLFLWRTV.

This sequence belongs to the methyltransferase superfamily. ETFBKMT family. In terms of assembly, interacts with HSPD1; this protein may possibly be a methylation substrate.

It localises to the cytoplasm. Its subcellular location is the mitochondrion matrix. It carries out the reaction L-lysyl-[protein] + 3 S-adenosyl-L-methionine = N(6),N(6),N(6)-trimethyl-L-lysyl-[protein] + 3 S-adenosyl-L-homocysteine + 3 H(+). Protein-lysine methyltransferase that selectively trimethylates the flavoprotein ETFB in mitochondria. Thereby, may negatively regulate the function of ETFB in electron transfer from Acyl-CoA dehydrogenases. The sequence is that of Electron transfer flavoprotein beta subunit lysine methyltransferase from Mus musculus (Mouse).